We begin with the raw amino-acid sequence, 360 residues long: N5-carboxyaminoimidazole ribonucleotide synthase (360 aa).

Residues Arg-98, Lys-138, 143 to 149, 173 to 176, Glu-181, His-204, and 255 to 256 contribute to the ATP site; these read GYDGKGQ, EGFV, and NE. An ATP-grasp domain is found at 102-285; it reads KSMFKDLGIP…QFENHLRAVA (184 aa).

This sequence belongs to the PurK/PurT family. As to quaternary structure, homodimer.

The enzyme catalyses 5-amino-1-(5-phospho-beta-D-ribosyl)imidazole + hydrogencarbonate + ATP = 5-carboxyamino-1-(5-phospho-D-ribosyl)imidazole + ADP + phosphate + 2 H(+). Its pathway is purine metabolism; IMP biosynthesis via de novo pathway; 5-amino-1-(5-phospho-D-ribosyl)imidazole-4-carboxylate from 5-amino-1-(5-phospho-D-ribosyl)imidazole (N5-CAIR route): step 1/2. Functionally, catalyzes the ATP-dependent conversion of 5-aminoimidazole ribonucleotide (AIR) and HCO(3)(-) to N5-carboxyaminoimidazole ribonucleotide (N5-CAIR). The polypeptide is N5-carboxyaminoimidazole ribonucleotide synthase (Pseudomonas aeruginosa (strain ATCC 15692 / DSM 22644 / CIP 104116 / JCM 14847 / LMG 12228 / 1C / PRS 101 / PAO1)).